We begin with the raw amino-acid sequence, 232 residues long: MKKILIIFSGGQDSTTCLIHYTNIYKEIYCITFDYNQLHKSEIDSARFISNYFNVKKHIFVDLKCLKNLSISSLTDEKISILDNHPLNFSLPSTFVPGRNILFLTLSSIYAFNHQINSIVLGVNEIDFSGYPDCRNAFLKKMNDVVQIGMNCKINFQSPLINLSKAEIWALSDYWNSTQFILNNTVTCYQGIQGKGCGQCQSCILRNDGFNKWKSNPSYYMKKLKEKFNFDN.

8–18 (FSGGQDSTTCL) serves as a coordination point for ATP. Residues Cys-188, Cys-197, Cys-200, and Cys-203 each contribute to the Zn(2+) site.

Belongs to the QueC family. The cofactor is Zn(2+).

It catalyses the reaction 7-carboxy-7-deazaguanine + NH4(+) + ATP = 7-cyano-7-deazaguanine + ADP + phosphate + H2O + H(+). It participates in purine metabolism; 7-cyano-7-deazaguanine biosynthesis. Its function is as follows. Catalyzes the ATP-dependent conversion of 7-carboxy-7-deazaguanine (CDG) to 7-cyano-7-deazaguanine (preQ(0)). This is 7-cyano-7-deazaguanine synthase from Buchnera aphidicola subsp. Schizaphis graminum (strain Sg).